The primary structure comprises 259 residues: Bacillaene synthase dehydratase PksH (259 aa).

Active-site residues include D68 and E137.

This sequence belongs to the enoyl-CoA hydratase/isomerase family.

The protein resides in the cytoplasm. The protein operates within antibiotic biosynthesis; bacillaene biosynthesis. In terms of biological role, involved in some intermediate steps for the synthesis of the antibiotic polyketide bacillaene which is involved in secondary metabolism. Catalyzes the dehydration of the (S)-3-hydroxy-3-methylglutaryl group tethered to PksL to a 3-methylglutaconyl moiety. The polypeptide is Bacillaene synthase dehydratase PksH (pksH) (Bacillus subtilis (strain 168)).